Here is a 616-residue protein sequence, read N- to C-terminus: Electron transfer flavoprotein-ubiquinone oxidoreductase, mitochondrial (616 aa).

The transit peptide at 1 to 32 (MLVRLTKLSCPAYQWFHALKIKKCLPLCAPRC) directs the protein to the mitochondrion. FAD is bound at residue 70–84 (VVIVGAGPAGLSAAI). At Lys95 the chain carries N6-acetyllysine. The stretch at 108 to 129 (IGAHTLSGACLDPAAFKELFPD) is an intramembrane region. N6-acetyllysine is present on residues Lys131 and Lys222. Residues Gly304 and Gly305 each contribute to the a ubiquinone site. N6-acetyllysine is present on residues Lys356 and Lys415. The stretch at 427–446 (AGLHVTEYEDNLKQSWVWKE) is an intramembrane region. Ser550 carries the post-translational modification Phosphoserine. [4Fe-4S] cluster-binding residues include Cys560, Cys585, Cys588, and Cys591. A 4Fe-4S ferredoxin-type domain is found at 576–605 (FRLQINAQNCVHCKTCDIKDPSQNINWVVP).

This sequence belongs to the ETF-QO/FixC family. Monomer. The cofactor is [4Fe-4S] cluster. It depends on FAD as a cofactor.

It localises to the mitochondrion inner membrane. The enzyme catalyses a ubiquinone + reduced [electron-transfer flavoprotein] = a ubiquinol + oxidized [electron-transfer flavoprotein] + H(+). Functionally, accepts electrons from ETF and reduces ubiquinone. This Rattus norvegicus (Rat) protein is Electron transfer flavoprotein-ubiquinone oxidoreductase, mitochondrial (Etfdh).